Consider the following 583-residue polypeptide: Inactive tyrosine-protein kinase RYK (583 aa).

The first 18 residues, 1 to 18 (MILRYLIFFAQLWALCLA), serve as a signal peptide directing secretion. At 19-173 (NVNMFISKEE…EVDDTDSIDK (155 aa)) the chain is on the extracellular side. The WIF domain occupies 22 to 147 (MFISKEEMNR…KVKLRQEKIC (126 aa)). 2 N-linked (GlcNAc...) asparagine glycosylation sites follow: asparagine 30 and asparagine 46. Cysteines 113 and 147 form a disulfide. A helical transmembrane segment spans residues 174–194 (AFFVIICIAAAFLLIVAATLI). Residues 195–583 (CYFKRSKKED…DFNIQLSQYI (389 aa)) are Cytoplasmic-facing. The Protein kinase domain maps to 281–583 (FQSLPLDMEG…DFNIQLSQYI (303 aa)). Residues 287-295 (DMEGTFGEV) and lysine 327 contribute to the ATP site.

The protein belongs to the protein kinase superfamily. Tyr protein kinase family.

It localises to the cell membrane. The protein resides in the basolateral cell membrane. Functionally, has no detectable kinase activity in vitro and is unlikely to function as a tyrosine kinase in vivo. Receptor which may act as a receptor for Wnt ligand mom-2. Plays a role in controlling P7.p vulva precursor cell lineage orientation during vulva development. Regulates pop-1 asymmetric distribution in P7.p and its daughter cells. Plays a role in the migration of ALM neurons during embryogenesis. The protein is Inactive tyrosine-protein kinase RYK of Caenorhabditis elegans.